Reading from the N-terminus, the 437-residue chain is GTPase Der (437 aa).

EngA-type G domains follow at residues Ala3 to Asn167 and Pro177 to Ser353. Residues Gly9–Ser16, Asp56–Trp60, Asn119–Asp122, Gly183–Ser190, Asp230–Ile234, and Asn295–Asp298 each bind GTP. Residues Thr354–Lys437 form the KH-like domain.

It belongs to the TRAFAC class TrmE-Era-EngA-EngB-Septin-like GTPase superfamily. EngA (Der) GTPase family. In terms of assembly, associates with the 50S ribosomal subunit.

GTPase that plays an essential role in the late steps of ribosome biogenesis. This Porphyromonas gingivalis (strain ATCC BAA-308 / W83) protein is GTPase Der.